A 565-amino-acid chain; its full sequence is Fusion glycoprotein F0 (565 aa).

Residues 1–25 form the signal peptide; that stretch reads MATYIQRVQCISALLSVVLTTLVSC. Residues 26–500 are Extracellular-facing; that stretch reads QIPRDRLSNI…VGRWYNSGAT (475 aa). Residues Cys-70 and Cys-199 are joined by a disulfide bond. Residue Asn-104 is glycosylated (N-linked (GlcNAc...) asparagine; by host). Residues 117 to 141 form a fusion peptide region; the sequence is FFGAVIGTIALGVATSAQITAGIAL. Residues 142-170 are a coiled coil; sequence AEAREAKRDIALIKESMTKTHKSIELLQN. N-linked (GlcNAc...) asparagine; by host glycosylation occurs at Asn-245. Residues 269–307 are leucine-zipper; that stretch reads IKGTVIDVDLERYMVTLSVKIPILSEVPGVLIHKASSIS. Intrachain disulfides connect Cys-338-Cys-347, Cys-362-Cys-370, Cys-394-Cys-399, and Cys-401-Cys-424. The N-linked (GlcNAc...) asparagine; by host glycan is linked to Asn-449. A coiled-coil region spans residues 466 to 491; the sequence is NLAAATDFLQDSRAELEKARKILSEV. Residues 501–521 traverse the membrane as a helical segment; that stretch reads LITIIVVMIVVLVVIIVIVIV. Residues 522-565 lie on the Cytoplasmic side of the membrane; it reads LYRLRRSMLMSNPAGRISRDTYTLEPKIRHMYTNGGFDAMTEKR.

Belongs to the paramyxoviruses fusion glycoprotein family. In terms of assembly, homotrimer of disulfide-linked F1-F2. Interacts with HN and M proteins. In natural infection, inactive F0 is matured into F1 and F2 outside the cell by one or more trypsin-like, arginine-specific endoprotease secreted by the bronchial epithelial cells. One identified protease that may be involved in this process is tryptase Clara. Unlike most paramyxoviruses, Sendai F0 processing occurs on the cell surface and induces a conformational change in the protein that unmasks the fusion peptide. F0 maturation is a primary determinant for organ tropism and pathogenicity. F1 and F2 display interchain and intrachain disulfide bonds, that are necessary for correct folding and intracellular transport. Post-translationally, N-glycosylated; glycans consist of a mixture of high mannose-type oligosaccharides and of complex-type oligosaccharides. Glycosylation at Asn-245 is essential for membrane localization and F0 cleavage.

The protein localises to the virion membrane. The protein resides in the host cell membrane. Its function is as follows. Class I viral fusion protein. Under the current model, the protein has at least 3 conformational states: pre-fusion native state, pre-hairpin intermediate state, and post-fusion hairpin state. During viral and plasma cell membrane fusion, the heptad repeat (HR) regions assume a trimer-of-hairpins structure, positioning the fusion peptide in close proximity to the C-terminal region of the ectodomain. The formation of this structure appears to drive apposition and subsequent fusion of viral and plasma cell membranes. Directs fusion of viral and cellular membranes leading to delivery of the nucleocapsid into the cytoplasm. This fusion is pH independent and occurs directly at the outer cell membrane. The trimer of F1-F2 (F protein) interacts with HN tetramer at the virion surface. Upon HN binding to its cellular receptor, the hydrophobic fusion peptide is unmasked and interacts with the cellular membrane, inducing the fusion between cell and virion membranes. Later in infection, F proteins expressed at the plasma membrane of infected cells could mediate fusion with adjacent cells to form syncytia, a cytopathic effect that could lead to tissue necrosis. The polypeptide is Fusion glycoprotein F0 (F) (Sendai virus (strain Hamamatsu) (SeV)).